The chain runs to 409 residues: Arginine deiminase (409 aa).

Cys-399 serves as the catalytic Amidino-cysteine intermediate.

Belongs to the arginine deiminase family.

It localises to the cytoplasm. The enzyme catalyses L-arginine + H2O = L-citrulline + NH4(+). The protein operates within amino-acid degradation; L-arginine degradation via ADI pathway; carbamoyl phosphate from L-arginine: step 1/2. This Streptococcus gordonii (strain Challis / ATCC 35105 / BCRC 15272 / CH1 / DL1 / V288) protein is Arginine deiminase.